Reading from the N-terminus, the 435-residue chain is Histidine--tRNA ligase (435 aa).

The protein belongs to the class-II aminoacyl-tRNA synthetase family. In terms of assembly, homodimer.

Its subcellular location is the cytoplasm. The catalysed reaction is tRNA(His) + L-histidine + ATP = L-histidyl-tRNA(His) + AMP + diphosphate + H(+). The polypeptide is Histidine--tRNA ligase (Synechococcus sp. (strain ATCC 27144 / PCC 6301 / SAUG 1402/1) (Anacystis nidulans)).